The primary structure comprises 494 residues: Glycerol kinase (494 aa).

Thr13 serves as a coordination point for ADP. 3 residues coordinate ATP: Thr13, Thr14, and Ser15. Thr13 serves as a coordination point for sn-glycerol 3-phosphate. Arg17 is a binding site for ADP. Residues Arg83, Glu84, Tyr135, and Asp244 each coordinate sn-glycerol 3-phosphate. Residues Arg83, Glu84, Tyr135, Asp244, and Gln245 each contribute to the glycerol site. 2 residues coordinate ADP: Thr266 and Gly309. Thr266, Gly309, Gln313, and Gly410 together coordinate ATP. Gly410 and Asn414 together coordinate ADP.

The protein belongs to the FGGY kinase family.

It carries out the reaction glycerol + ATP = sn-glycerol 3-phosphate + ADP + H(+). Its pathway is polyol metabolism; glycerol degradation via glycerol kinase pathway; sn-glycerol 3-phosphate from glycerol: step 1/1. With respect to regulation, inhibited by fructose 1,6-bisphosphate (FBP). Key enzyme in the regulation of glycerol uptake and metabolism. Catalyzes the phosphorylation of glycerol to yield sn-glycerol 3-phosphate. This chain is Glycerol kinase, found in Shewanella baltica (strain OS185).